Reading from the N-terminus, the 86-residue chain is Large ribosomal subunit protein eL43 (86 aa).

Zn(2+) is bound by residues Cys-38, Cys-41, Cys-57, and Cys-60. The C4-type zinc-finger motif lies at 38-60 (CPFCGSTGTVRRVSVGVWSCRKC).

This sequence belongs to the eukaryotic ribosomal protein eL43 family. Putative zinc-binding subfamily. In terms of assembly, part of the 50S ribosomal subunit. Zn(2+) is required as a cofactor.

Functionally, binds to the 23S rRNA. This is Large ribosomal subunit protein eL43 from Aeropyrum pernix (strain ATCC 700893 / DSM 11879 / JCM 9820 / NBRC 100138 / K1).